The following is a 78-amino-acid chain: UPF0369 protein RF_1112 (78 aa).

This sequence belongs to the SDHAF4 family.

This is UPF0369 protein RF_1112 from Rickettsia felis (strain ATCC VR-1525 / URRWXCal2) (Rickettsia azadi).